Here is an 830-residue protein sequence, read N- to C-terminus: uncharacterized protein (830 aa).

Disordered stretches follow at residues 1–28 (MGVQLKLDPNSKNWLRQPDQQPIQDSIC), 70–147 (RRAN…GNFA), and 186–210 (AASPTVSFSPASTSENLTPTSSKSL). The span at 10 to 27 (NSKNWLRQPDQQPIQDSI) shows a compositional bias: polar residues. 2 stretches are compositionally biased toward low complexity: residues 100 to 130 (QKSSNSRKSIRSQSRSRSSSVGSDSQASIQS) and 186 to 199 (AASPTVSFSPASTS). A compositionally biased stretch (polar residues) spans 200–210 (ENLTPTSSKSL). The next 10 helical transmembrane spans lie at 505–525 (WLVAFMHGVASASILPVVYGG), 529–549 (DMLIGFVLGLLLGIFRVYINP), 551–571 (FFLFDSLFEVIISIILSFLGR), 584–604 (FCFAALVEGAITLILPGYVVF), 622–642 (MLYAVIFSLFLSFGITIGSAL), 659–679 (IIAVSPYWYILLIPIFTLSLL), 691–711 (IQMFVACCGYVVYYFSSLHFG), 715–735 (ISSAIGSFAVGCLGNMYSHFI), 740–760 (FAVVLPAIFVLVPSGFAAQGG), and 802–822 (IAIGIAIGFLASSLTVYPFFG).

The protein belongs to the ThrE exporter (TC 2.A.79) family.

The protein resides in the cell membrane. The protein localises to the cell tip. This is an uncharacterized protein from Schizosaccharomyces pombe (strain 972 / ATCC 24843) (Fission yeast).